The primary structure comprises 428 residues: Beta-1,3-galactosyl-O-glycosyl-glycoprotein beta-1,6-N-acetylglucosaminyltransferase (428 aa).

The Cytoplasmic portion of the chain corresponds to Met1–Arg9. A mediates interaction with GOLPH3 and is necessary and sufficient for localization to the Golgi region spans residues Leu5–Arg9. The helical; Signal-anchor for type II membrane protein transmembrane segment at Leu10–Leu32 threads the bilayer. The interval Arg33–Phe121 is stem region. The Lumenal segment spans residues Arg33–His428. N-linked (GlcNAc...) asparagine glycosylation is found at Asn58 and Asn95. Disulfide bonds link Cys59–Cys413, Cys100–Cys172, Cys151–Cys199, and Cys372–Cys381. The tract at residues Pro122–His428 is catalytic. UDP-N-acetyl-alpha-D-glucosamine is bound by residues Val128–His130, Asp155–Lys157, and Tyr187. The a glycoprotein site is built by Glu243, Lys251, Arg254, Glu320, Lys341, and Tyr358. The active-site Nucleophile is the Glu320. UDP-N-acetyl-alpha-D-glucosamine is bound by residues Arg378 and Lys401.

The protein belongs to the glycosyltransferase 14 family. In terms of assembly, interacts with GOLPH3; may control GCNT1 retention in the Golgi. As to expression, highly expressed in activated T-lymphocytes and myeloid cells.

It localises to the golgi apparatus membrane. It catalyses the reaction a 3-O-[beta-D-galactosyl-(1-&gt;3)-N-acetyl-alpha-D-galactosaminyl]-L-seryl-[protein] + UDP-N-acetyl-alpha-D-glucosamine = 3-O-{beta-D-galactosyl-(1-&gt;3)-[N-acetyl-beta-D-glucosaminyl-(1-&gt;6)]-N-acetyl-alpha-D-galactosaminyl}-L-seryl-[protein] + UDP + H(+). It carries out the reaction a 3-O-[beta-D-galactosyl-(1-&gt;3)-N-acetyl-alpha-D-galactosaminyl]-L-threonyl-[protein] + UDP-N-acetyl-alpha-D-glucosamine = a 3-O-{beta-D-galactosyl-(1-&gt;3)-[N-acetyl-beta-D-glucosaminyl-(1-&gt;6)]-N-acetyl-alpha-D-galactosaminyl}-L-threonyl-[protein] + UDP + H(+). The catalysed reaction is a globoside GalGb4Cer + UDP-N-acetyl-alpha-D-glucosamine = a globoside GlcNAc-(beta1-&gt;6)-GalGb4Cer + UDP + H(+). The enzyme catalyses a ganglioside GA1 + UDP-N-acetyl-alpha-D-glucosamine = a ganglioside beta-D-GlcNAc-(1-&gt;6)-GA1 + UDP + H(+). Its pathway is protein modification; protein glycosylation. The protein operates within glycolipid biosynthesis. In terms of biological role, glycosyltransferase that catalyzes the transfer of an N-acetylglucosamine (GlcNAc) moiety in beta1-6 linkage from UDP-GlcNAc onto mucin-type core 1 O-glycan to form the branched mucin-type core 2 O-glycan. The catalysis is metal ion-independent and occurs with inversion of the anomeric configuration of sugar donor. Selectively involved in synthesis of mucin-type core 2 O-glycans that serve as scaffolds for the display of selectin ligand sialyl Lewis X epitope by myeloid cells, with an impact on homeostasis and recruitment to inflammatory sites. Can also act on glycolipid substrates. Transfers GlcNAc moiety to GalGb4Cer globosides in a reaction step to the synthesis of stage-specific embryonic antigen 1 (SSEA-1) determinant. Can use Galbeta1-3GalNAcalpha1- and Galbeta1-3GalNAcbeta1- oligosaccharide derivatives as acceptor substrates. This Homo sapiens (Human) protein is Beta-1,3-galactosyl-O-glycosyl-glycoprotein beta-1,6-N-acetylglucosaminyltransferase (GCNT1).